Reading from the N-terminus, the 32-residue chain is Trypsin inhibitor 4 (32 aa).

3 cysteine pairs are disulfide-bonded: cysteine 6–cysteine 23, cysteine 13–cysteine 25, and cysteine 19–cysteine 31.

Belongs to the protease inhibitor I7 (squash-type serine protease inhibitor) family.

The protein localises to the secreted. Inhibits trypsin. This Cucurbita maxima (Pumpkin) protein is Trypsin inhibitor 4.